The primary structure comprises 155 residues: Ribosomal RNA large subunit methyltransferase H (155 aa).

S-adenosyl-L-methionine is bound by residues leucine 72, glycine 104, and 123 to 128; that span reads LAKITL.

This sequence belongs to the RNA methyltransferase RlmH family. Homodimer.

It localises to the cytoplasm. The enzyme catalyses pseudouridine(1915) in 23S rRNA + S-adenosyl-L-methionine = N(3)-methylpseudouridine(1915) in 23S rRNA + S-adenosyl-L-homocysteine + H(+). Functionally, specifically methylates the pseudouridine at position 1915 (m3Psi1915) in 23S rRNA. This Mycoplasma capricolum subsp. capricolum (strain California kid / ATCC 27343 / NCTC 10154) protein is Ribosomal RNA large subunit methyltransferase H.